The chain runs to 371 residues: Forkhead box protein E1 (371 aa).

Residues 21–53 (EERGEAAAAGAGVPAEAAGRGAGGRRRKRPLQR) are disordered. Residues 26-39 (AAAAGAGVPAEAAG) show a composition bias toward low complexity. Residues 43–52 (GGRRRKRPLQ) are compositionally biased toward basic residues. A DNA-binding region (fork-head) is located at residues 55 to 149 (KPPYSYIALI…ESGSFLRRRK (95 aa)).

Phosphorylated. In terms of tissue distribution, expressed in Rathke pouch, in thyroid, and in the epithelium of the pharyngeal wall and arches, whereas it is absent in the epithelium of the pharyngeal pouches.

Its subcellular location is the nucleus. Functionally, transcription factor that binds consensus sites on a variety of gene promoters and activate their transcription. Involved in proper palate formation, most probably through the expression of MSX1 and TGFB3 genes which are direct targets of this transcription factor. Also implicated in thyroid gland morphogenesis. May indirectly play a role in cell growth and migration through the regulation of WNT5A expression. The chain is Forkhead box protein E1 (Foxe1) from Mus musculus (Mouse).